The following is a 283-amino-acid chain: ATP phosphoribosyltransferase (283 aa).

Belongs to the ATP phosphoribosyltransferase family. Long subfamily. The cofactor is Mg(2+).

The protein localises to the cytoplasm. The catalysed reaction is 1-(5-phospho-beta-D-ribosyl)-ATP + diphosphate = 5-phospho-alpha-D-ribose 1-diphosphate + ATP. Its pathway is amino-acid biosynthesis; L-histidine biosynthesis; L-histidine from 5-phospho-alpha-D-ribose 1-diphosphate: step 1/9. With respect to regulation, feedback inhibited by histidine. Functionally, catalyzes the condensation of ATP and 5-phosphoribose 1-diphosphate to form N'-(5'-phosphoribosyl)-ATP (PR-ATP). Has a crucial role in the pathway because the rate of histidine biosynthesis seems to be controlled primarily by regulation of HisG enzymatic activity. The polypeptide is ATP phosphoribosyltransferase (Bifidobacterium longum subsp. infantis (strain ATCC 15697 / DSM 20088 / JCM 1222 / NCTC 11817 / S12)).